Consider the following 474-residue polypeptide: 3-isopropylmalate dehydratase large subunit (474 aa).

3 residues coordinate [4Fe-4S] cluster: C355, C415, and C418.

This sequence belongs to the aconitase/IPM isomerase family. LeuC type 1 subfamily. In terms of assembly, heterodimer of LeuC and LeuD. Requires [4Fe-4S] cluster as cofactor.

The enzyme catalyses (2R,3S)-3-isopropylmalate = (2S)-2-isopropylmalate. It participates in amino-acid biosynthesis; L-leucine biosynthesis; L-leucine from 3-methyl-2-oxobutanoate: step 2/4. Functionally, catalyzes the isomerization between 2-isopropylmalate and 3-isopropylmalate, via the formation of 2-isopropylmaleate. This Shewanella sp. (strain W3-18-1) protein is 3-isopropylmalate dehydratase large subunit.